The sequence spans 561 residues: Asparagine synthetase [glutamine-hydrolyzing] (561 aa).

Cysteine 2 serves as the catalytic For GATase activity. A Glutamine amidotransferase type-2 domain is found at 2-191 (CGIWALFGSD…PGHYEVLDLK (190 aa)). L-glutamine-binding positions include 49 to 53 (RLAVV), 75 to 77 (NGE), and aspartate 97. In terms of domain architecture, Asparagine synthetase spans 213-536 (HAIYDSVEKL…PGRADWLTHY (324 aa)). Residues leucine 256, isoleucine 288, and 363–364 (SG) contribute to the ATP site. At lysine 385 the chain carries N6-acetyllysine. Threonine 545 is modified (phosphothreonine). Phosphoserine is present on serine 557.

It carries out the reaction L-aspartate + L-glutamine + ATP + H2O = L-asparagine + L-glutamate + AMP + diphosphate + H(+). The protein operates within amino-acid biosynthesis; L-asparagine biosynthesis; L-asparagine from L-aspartate (L-Gln route): step 1/1. This chain is Asparagine synthetase [glutamine-hydrolyzing] (Asns), found in Mus musculus (Mouse).